The sequence spans 239 residues: Transcriptional regulatory protein BtsR (239 aa).

One can recognise a Response regulatory domain in the interval 3–116; that stretch reads KVLIVDDEPL…RLEKTLARLR (114 aa). Asp-54 is subject to 4-aspartylphosphate. Positions 137-239 constitute an HTH LytTR-type domain; that stretch reads IPCTGHSRIY…LKSLKEAIGL (103 aa).

In terms of processing, phosphorylated by BtsS.

Its function is as follows. Member of the two-component regulatory system BtsS/BtsR. BtsR regulates expression of btsT by binding to its promoter region. The polypeptide is Transcriptional regulatory protein BtsR (Escherichia coli O6:H1 (strain CFT073 / ATCC 700928 / UPEC)).